The primary structure comprises 142 residues: MKTFSAKPHEVKRDWFVVDASDKVLGRLAAEVARRLRGKHKAIYTPHVDTGDFIVVVNVEKLRVTGNKALDKKYYRHTGYPGGIYETNFTKLQQRFPERVLEKAVKGMLPKGPLGYAMLKKLKCYAGGEHPHSAQQPQVLEI.

It belongs to the universal ribosomal protein uL13 family. As to quaternary structure, part of the 50S ribosomal subunit.

In terms of biological role, this protein is one of the early assembly proteins of the 50S ribosomal subunit, although it is not seen to bind rRNA by itself. It is important during the early stages of 50S assembly. This chain is Large ribosomal subunit protein uL13, found in Aromatoleum aromaticum (strain DSM 19018 / LMG 30748 / EbN1) (Azoarcus sp. (strain EbN1)).